Here is a 216-residue protein sequence, read N- to C-terminus: Pyrophosphatase PpaX (216 aa).

Asp-9 functions as the Nucleophile in the catalytic mechanism.

This sequence belongs to the HAD-like hydrolase superfamily. PpaX family. Mg(2+) serves as cofactor.

It carries out the reaction diphosphate + H2O = 2 phosphate + H(+). Functionally, hydrolyzes pyrophosphate formed during P-Ser-HPr dephosphorylation by HPrK/P. Might play a role in controlling the intracellular pyrophosphate pool. The sequence is that of Pyrophosphatase PpaX from Bacillus anthracis (strain A0248).